Reading from the N-terminus, the 23-residue chain is Elongation factor Tu (23 aa).

Belongs to the GTP-binding elongation factor family. EF-Tu/EF-1A subfamily. As to quaternary structure, monomer. Post-translationally, the N-terminus is blocked. In terms of processing, the C-terminus may be subjected to proteolysis.

The protein localises to the cytoplasm. This protein promotes the GTP-dependent binding of aminoacyl-tRNA to the A-site of ribosomes during protein biosynthesis. This Delftia acidovorans (Pseudomonas acidovorans) protein is Elongation factor Tu (tuf).